We begin with the raw amino-acid sequence, 302 residues long: Lysosomal thioesterase PPT2 (302 aa).

Residues 1 to 27 form the signal peptide; sequence MLGLCGQRLPAAWVLLLLPFLPLLLLA. Asparagine 60 carries an N-linked (GlcNAc...) asparagine glycan. Cystine bridges form between cysteine 109/cysteine 117 and cysteine 165/cysteine 176. Serine 111 serves as the catalytic Nucleophile. Asparagine 190 and asparagine 206 each carry an N-linked (GlcNAc...) asparagine glycan. Aspartate 228 is an active-site residue. Asparagine 245 is a glycosylation site (N-linked (GlcNAc...) asparagine). A disulfide bridge links cysteine 276 with cysteine 296. Residue histidine 283 is part of the active site. N-linked (GlcNAc...) asparagine glycosylation is present at asparagine 289.

It belongs to the palmitoyl-protein thioesterase family. Broadly expressed, with highest levels in skeletal muscle.

It is found in the lysosome. It catalyses the reaction hexadecanoyl-CoA + H2O = hexadecanoate + CoA + H(+). The catalysed reaction is S-hexadecanoyl-N-acetylcysteamine + H2O = N-acetylcysteamine + hexadecanoate + H(+). Catalyzes the cleavage of thioester bonds from S-palmitoyl-CoA or S-palmitoyl-N-acetylcysteamine (unbranched structures) but does not have activity against palmitoylcysteine or palmitoylated proteins, branched structures or bulky head groups. Conversely, hydrolyzes both long and short chain fatty acyl-CoA substrate. Its function is as follows. Catalytically inactive due to lack of active site His-283. The polypeptide is Lysosomal thioesterase PPT2 (Homo sapiens (Human)).